A 243-amino-acid polypeptide reads, in one-letter code: UPF0758 protein SYNPCC7002_A0220 (243 aa).

Positions 112–235 constitute an MPN domain; that stretch reads IIVDSPEAAA…FGSLRQKTAL (124 aa). 3 residues coordinate Zn(2+): histidine 184, histidine 186, and aspartate 197. Residues 184 to 197 carry the JAMM motif motif; that stretch reads HNHPSGNVDPSPED.

Belongs to the UPF0758 family.

The protein is UPF0758 protein SYNPCC7002_A0220 of Picosynechococcus sp. (strain ATCC 27264 / PCC 7002 / PR-6) (Agmenellum quadruplicatum).